Here is a 701-residue protein sequence, read N- to C-terminus: Protein mono-ADP-ribosyltransferase PARP12 (701 aa).

3 consecutive C3H1-type zinc fingers follow at residues 94 to 119, 150 to 179, and 180 to 202; these read LCRF…HSLT, WLLP…IKLH, and ICQY…HDFS. The segment at 234–268 is disordered; that stretch reads KNKSSAPSRVPPLFVPQGTSERKDSSGSVSPNTLS. S258 carries the phosphoserine modification. Positions 259-268 are enriched in polar residues; it reads SGSVSPNTLS. 2 C3H1-type zinc fingers span residues 270-297 and 271-296; these read EEGD…HFHL and EGDQ…VHFH. WWE domains follow at residues 298–361 and 364–458; these read PYRW…RLST and SVTK…KVCR. Residue C474 is modified to ADP-ribosylcysteine. The PARP catalytic domain maps to 484–698; it reads IPDYWDSSAL…ILLALGSLFS (215 aa). ADP-ribosyl aspartic acid occurs at positions 600 and 611.

This sequence belongs to the ARTD/PARP family. As to quaternary structure, interacts with PARP11; this interaction plays a key role in zika virus suppression. Interacts with ISG15. Post-translationally, auto-mono-ADP-ribosylated. In terms of processing, phosphorylated by PRKD1.

It is found in the nucleus. It localises to the golgi apparatus. The protein localises to the trans-Golgi network. The protein resides in the cytoplasm. Its subcellular location is the stress granule. The catalysed reaction is L-aspartyl-[protein] + NAD(+) = 4-O-(ADP-D-ribosyl)-L-aspartyl-[protein] + nicotinamide. The enzyme catalyses L-cysteinyl-[protein] + NAD(+) = S-(ADP-D-ribosyl)-L-cysteinyl-[protein] + nicotinamide + H(+). Its function is as follows. Mono-ADP-ribosyltransferase that mediates mono-ADP-ribosylation of target proteins. Acts as an antiviral factor by cooperating with PARP11 to suppress Zika virus replication. Displays anti-alphavirus activity during IFN-gamma immune activation by directly ADP-ribosylating the alphaviral non-structural proteins nsP3 and nsP4. Acts as a component of the PRKD1-driven regulatory cascade that selectively controls a major branch of the basolateral transport pathway by catalyzing the MARylation of GOLGA1. Acts also as a key regulator of mitochondrial function, protein translation, and inflammation. Inhibits PINK1/Parkin-dependent mitophagy and promotes cartilage degeneration by inhibiting the ubiquitination and SUMOylation of MFN1/2 by upregulating ISG15 and ISGylation. The polypeptide is Protein mono-ADP-ribosyltransferase PARP12 (Homo sapiens (Human)).